Consider the following 578-residue polypeptide: Probable cytochrome c oxidase subunit 1-alpha (578 aa).

A disordered region spans residues Met-1–Leu-21. Residues Ile-44–Leu-64 traverse the membrane as a helical segment. Fe(II)-heme a is bound at residue His-90. The next 6 helical transmembrane spans lie at Ile-93–Leu-113, Leu-125–Leu-145, Leu-174–Ile-194, Val-217–Ala-237, Leu-262–Val-282, and Ile-294–Val-314. Residues His-268 and Tyr-272 each coordinate Cu cation. The segment at residues His-268 to Tyr-272 is a cross-link (1'-histidyl-3'-tyrosine (His-Tyr)). Residues His-317 and His-318 each coordinate Cu cation. The next 2 membrane-spanning stretches (helical) occupy residues Met-319 to Val-339 and Met-363 to Leu-383. His-401 is a binding site for heme a3. Transmembrane regions (helical) follow at residues Phe-402–Trp-422, Ile-437–Gly-457, and Ile-480–Trp-500. His-403 lines the Fe(II)-heme a pocket.

The protein belongs to the heme-copper respiratory oxidase family. Associates with subunits II, III and IV to form cytochrome c oxidase. Cu(2+) is required as a cofactor. Heme serves as cofactor.

The protein resides in the cell membrane. It catalyses the reaction 4 Fe(II)-[cytochrome c] + O2 + 8 H(+)(in) = 4 Fe(III)-[cytochrome c] + 2 H2O + 4 H(+)(out). It participates in energy metabolism; oxidative phosphorylation. In terms of biological role, cytochrome c oxidase is the component of the respiratory chain that catalyzes the reduction of oxygen to water. Subunits 1-3 form the functional core of the enzyme complex. CO I is the catalytic subunit of the enzyme. Electrons originating in cytochrome c are transferred via the copper A center of subunit 2 and heme A of subunit 1 to the bimetallic center formed by heme A3 and copper B. The sequence is that of Probable cytochrome c oxidase subunit 1-alpha (ctaD1) from Streptomyces coelicolor (strain ATCC BAA-471 / A3(2) / M145).